The sequence spans 711 residues: Acyl-CoA dehydrogenase FadE34 (711 aa).

This sequence belongs to the acyl-CoA dehydrogenase family. As to quaternary structure, homodimer. Requires FAD as cofactor.

The enzyme catalyses 3-oxochol-4-en-24-oyl-CoA + A = (22E)-3-oxochola-4,22-dien-24-oyl-CoA + AH2. It carries out the reaction 3beta-hydroxy-chol-5-ene-24-oyl-CoA + A = 3beta-hydroxy-chol-5,22-dien-24-oyl-CoA + AH2. It functions in the pathway steroid metabolism; cholesterol degradation. Involved in the second cycle of side chain dehydrogenation in the beta-oxidation of cholesterol catabolism. It contributes partly to the virulence by increasing the efficiency of beta-oxidation. Catalyzes the dehydrogenation of the five-carbon steroid side chain of 3-oxo-chol-4-en-24-oyl-CoA (3-OCO-CoA) to yield 3-oxochol-4,22-dien-24-oyl-CoA. Can also use 3beta-hydroxy-chol-5-ene-24-oyl-CoA, and shows weak activity with cholyl-CoA and deoxycholyl-CoA. The protein is Acyl-CoA dehydrogenase FadE34 (fadE34) of Mycobacterium tuberculosis (strain ATCC 25618 / H37Rv).